The chain runs to 205 residues: Thiamine-phosphate synthase (205 aa).

Residues 34–38 and asparagine 66 contribute to the 4-amino-2-methyl-5-(diphosphooxymethyl)pyrimidine site; that span reads QLRCK. Positions 67 and 86 each coordinate Mg(2+). Serine 105 contributes to the 4-amino-2-methyl-5-(diphosphooxymethyl)pyrimidine binding site. Position 131-133 (131-133) interacts with 2-[(2R,5Z)-2-carboxy-4-methylthiazol-5(2H)-ylidene]ethyl phosphate; it reads TTT. Lysine 134 lines the 4-amino-2-methyl-5-(diphosphooxymethyl)pyrimidine pocket. Glycine 163 lines the 2-[(2R,5Z)-2-carboxy-4-methylthiazol-5(2H)-ylidene]ethyl phosphate pocket.

Belongs to the thiamine-phosphate synthase family. Mg(2+) serves as cofactor.

The catalysed reaction is 2-[(2R,5Z)-2-carboxy-4-methylthiazol-5(2H)-ylidene]ethyl phosphate + 4-amino-2-methyl-5-(diphosphooxymethyl)pyrimidine + 2 H(+) = thiamine phosphate + CO2 + diphosphate. It catalyses the reaction 2-(2-carboxy-4-methylthiazol-5-yl)ethyl phosphate + 4-amino-2-methyl-5-(diphosphooxymethyl)pyrimidine + 2 H(+) = thiamine phosphate + CO2 + diphosphate. It carries out the reaction 4-methyl-5-(2-phosphooxyethyl)-thiazole + 4-amino-2-methyl-5-(diphosphooxymethyl)pyrimidine + H(+) = thiamine phosphate + diphosphate. Its pathway is cofactor biosynthesis; thiamine diphosphate biosynthesis; thiamine phosphate from 4-amino-2-methyl-5-diphosphomethylpyrimidine and 4-methyl-5-(2-phosphoethyl)-thiazole: step 1/1. In terms of biological role, condenses 4-methyl-5-(beta-hydroxyethyl)thiazole monophosphate (THZ-P) and 2-methyl-4-amino-5-hydroxymethyl pyrimidine pyrophosphate (HMP-PP) to form thiamine monophosphate (TMP). The polypeptide is Thiamine-phosphate synthase (Neisseria meningitidis serogroup A / serotype 4A (strain DSM 15465 / Z2491)).